A 345-amino-acid polypeptide reads, in one-letter code: PI-PLC X domain-containing protein 1 (345 aa).

A PI-PLC X-box domain is found at 52-228 (QLWDVPLHHL…QVIVSYEDEA (177 aa)).

Expressed at highest levels in brain and kidney. Also detected in stomach, thymus and skeletal muscle.

It is found in the cytoplasm. This chain is PI-PLC X domain-containing protein 1 (Plcxd1), found in Mus musculus (Mouse).